A 603-amino-acid chain; its full sequence is Extracellular basic protease (603 aa).

An N-terminal signal peptide occupies residues 1 to 21; the sequence is MNLSNISAVKVLTLVVSAAIA. Positions 22–132 are excised as a propeptide; the sequence is GQVCAAESIV…VEVDRLAYPK (111 aa). The region spanning 143–468 is the Peptidase S8 domain; sequence QWHYFGNYGV…SGIVDANAAV (326 aa). Asp173 (charge relay system) is an active-site residue. The disordered stretch occupies residues 197-221; that stretch reads PNARDGDQRDNNPADEGDWFDNWDC. 2 disulfide bridges follow: Cys221-Cys273 and Cys315-Cys352. His237 acts as the Charge relay system in catalysis. Catalysis depends on Ser409, which acts as the Charge relay system. A propeptide spanning residues 477-603 is cleaved from the precursor; the sequence is RAQPRPPVNQ…GSIDSWSLTF (127 aa). A P/Homo B domain is found at 478-603; sequence AQPRPPVNQP…GSIDSWSLTF (126 aa).

This sequence belongs to the peptidase S8 family.

It localises to the secreted. The protein is Extracellular basic protease (bprV) of Dichelobacter nodosus (Bacteroides nodosus).